Consider the following 72-residue polypeptide: Subtilisin-chymotrypsin inhibitor-2B (72 aa).

This sequence belongs to the protease inhibitor I13 (potato type I serine protease inhibitor) family.

Inhibits both subtilisin and chymotrypsin. The chain is Subtilisin-chymotrypsin inhibitor-2B from Hordeum vulgare (Barley).